A 181-amino-acid chain; its full sequence is Translation initiation factor IF-3 (181 aa).

The protein belongs to the IF-3 family. Monomer.

It is found in the cytoplasm. Its function is as follows. IF-3 binds to the 30S ribosomal subunit and shifts the equilibrium between 70S ribosomes and their 50S and 30S subunits in favor of the free subunits, thus enhancing the availability of 30S subunits on which protein synthesis initiation begins. The chain is Translation initiation factor IF-3 from Mycoplasma capricolum subsp. capricolum (strain California kid / ATCC 27343 / NCTC 10154).